The chain runs to 406 residues: NAD(P)H-quinone oxidoreductase subunit H, organellar chromatophore (406 aa).

This sequence belongs to the complex I 49 kDa subunit family. In terms of assembly, NDH is composed of at least 16 different subunits, 5 of which are encoded in the nucleus.

The protein localises to the plastid. It localises to the organellar chromatophore thylakoid membrane. The enzyme catalyses a quinone + NADH + H(+) = a quinol + NAD(+). Its function is as follows. NDH shuttles electrons from NAD(P)H:plastoquinone, via FMN and iron-sulfur (Fe-S) centers, to quinones in the photosynthetic chain and possibly in a chloroplast respiratory chain. The immediate electron acceptor for the enzyme in this species is believed to be plastoquinone. Couples the redox reaction to proton translocation, and thus conserves the redox energy in a proton gradient. The protein is NAD(P)H-quinone oxidoreductase subunit H, organellar chromatophore of Paulinella chromatophora.